The following is a 410-amino-acid chain: Arginine deiminase (410 aa).

The active-site Amidino-cysteine intermediate is cysteine 400.

This sequence belongs to the arginine deiminase family.

It is found in the cytoplasm. It carries out the reaction L-arginine + H2O = L-citrulline + NH4(+). Its pathway is amino-acid degradation; L-arginine degradation via ADI pathway; carbamoyl phosphate from L-arginine: step 1/2. The chain is Arginine deiminase from Bacillus cereus (strain G9842).